Here is a 1045-residue protein sequence, read N- to C-terminus: 3-hydroxy-3-methylglutaryl-coenzyme A reductase 2 (1045 aa).

Residues M1–R24 lie on the Cytoplasmic side of the membrane. A helical membrane pass occupies residues Y25–T45. At Q46 to Q186 the chain is on the lumenal side. N-linked (GlcNAc...) asparagine glycans are attached at residues N115, N150, N158, and N179. Residues F187–F207 traverse the membrane as a helical segment. The 169-residue stretch at D188–M356 folds into the SSD domain. At N208–K216 the chain is on the cytoplasmic side. The helical transmembrane segment at F217–T237 threads the bilayer. The Lumenal segment spans residues T238 to K243. Residues K244 to F264 form a helical membrane-spanning segment. Topologically, residues K265–G301 are cytoplasmic. A helical membrane pass occupies residues A302–A322. Topologically, residues R323 to H324 are lumenal. The chain crosses the membrane as a helical span at residues L325–L345. The Cytoplasmic portion of the chain corresponds to S346 to V402. The helical transmembrane segment at A403–F423 threads the bilayer. Residues T424 to Q497 lie on the Lumenal side of the membrane. 2 N-linked (GlcNAc...) asparagine glycosylation sites follow: N428 and N455. Residues F498–L518 form a helical membrane-spanning segment. Topologically, residues N519–L1045 are cytoplasmic. Position 565 is a phosphothreonine (T565). E710 functions as the Charge relay system in the catalytic mechanism. Position 716–722 (S716–K722) interacts with CoA. NADP(+) is bound by residues S777 to F779 and D804 to S812. The active-site Charge relay system is K844. V873–K875 contributes to the CoA binding site. The active-site Charge relay system is D920. S1015–H1016 lines the CoA pocket. H1016 serves as the catalytic Proton donor. A disordered region spans residues T1018–L1045. N1020 to R1021 serves as a coordination point for NADP(+).

The protein belongs to the HMG-CoA reductase family.

It localises to the endoplasmic reticulum membrane. It is found in the nucleus envelope. The catalysed reaction is (R)-mevalonate + 2 NADP(+) + CoA = (3S)-3-hydroxy-3-methylglutaryl-CoA + 2 NADPH + 2 H(+). It functions in the pathway metabolic intermediate biosynthesis; (R)-mevalonate biosynthesis; (R)-mevalonate from acetyl-CoA: step 3/3. Functionally, HMG-CoA reductase; part of the first module of ergosterol biosynthesis pathway constitutes by the early steps of the pathway, conserved across all eukaryotes, and which results in the formation of mevalonate from acetyl-coenzyme A (acetyl-CoA). HMG1 and HMG2 catalyze the reduction of hydroxymethylglutaryl-CoA (HMG-CoA) to mevalonate that is the rate-limiting step within the first mosule. The first module starts with the action of the cytosolic acetyl-CoA acetyltransferase ERG10 that catalyzes the formation of acetoacetyl-CoA. The hydroxymethylglutaryl-CoA synthase ERG13 then condenses acetyl-CoA with acetoacetyl-CoA to form HMG-CoA. The rate-limiting step of the early module is the reduction to mevalonate by the 3-hydroxy-3-methylglutaryl-coenzyme A (HMG-CoA) reductases HMG1 and HMG2 which are derived from a single ancestral HMGR gene by gene duplication. This chain is 3-hydroxy-3-methylglutaryl-coenzyme A reductase 2, found in Saccharomyces cerevisiae (strain ATCC 204508 / S288c) (Baker's yeast).